The following is a 145-amino-acid chain: Small ribosomal subunit protein uS12 (145 aa).

Belongs to the universal ribosomal protein uS12 family. As to quaternary structure, part of the 30S ribosomal subunit.

With S4 and S5 plays an important role in translational accuracy. Located at the interface of the 30S and 50S subunits. This Cenarchaeum symbiosum (strain A) protein is Small ribosomal subunit protein uS12.